Consider the following 436-residue polypeptide: Chaperone SurA (436 aa).

Residues 1-30 form the signal peptide; it reads MKFFQRPERRLKQWGLALLLAASALLPARA. PpiC domains lie at 180–281 and 291–389; these read ETEY…KLVD and VTQT…QVLE.

The protein localises to the periplasm. The enzyme catalyses [protein]-peptidylproline (omega=180) = [protein]-peptidylproline (omega=0). Chaperone involved in the correct folding and assembly of outer membrane proteins. Recognizes specific patterns of aromatic residues and the orientation of their side chains, which are found more frequently in integral outer membrane proteins. May act in both early periplasmic and late outer membrane-associated steps of protein maturation. The polypeptide is Chaperone SurA (Thiobacillus denitrificans (strain ATCC 25259 / T1)).